A 435-amino-acid chain; its full sequence is Tryptophan synthase beta chain (435 aa).

N6-(pyridoxal phosphate)lysine is present on K92.

Belongs to the TrpB family. As to quaternary structure, tetramer of two alpha and two beta chains. It depends on pyridoxal 5'-phosphate as a cofactor.

It catalyses the reaction (1S,2R)-1-C-(indol-3-yl)glycerol 3-phosphate + L-serine = D-glyceraldehyde 3-phosphate + L-tryptophan + H2O. It participates in amino-acid biosynthesis; L-tryptophan biosynthesis; L-tryptophan from chorismate: step 5/5. The beta subunit is responsible for the synthesis of L-tryptophan from indole and L-serine. This Albidiferax ferrireducens (strain ATCC BAA-621 / DSM 15236 / T118) (Rhodoferax ferrireducens) protein is Tryptophan synthase beta chain.